Here is a 144-residue protein sequence, read N- to C-terminus: Ribosome maturation factor RimP (144 aa).

This sequence belongs to the RimP family.

It is found in the cytoplasm. Functionally, required for maturation of 30S ribosomal subunits. This is Ribosome maturation factor RimP from Methylobacillus flagellatus (strain ATCC 51484 / DSM 6875 / VKM B-1610 / KT).